A 138-amino-acid chain; its full sequence is Invertebrate-type lysozyme 6 (138 aa).

The N-terminal stretch at methionine 1–serine 18 is a signal peptide. Residues aspartate 19–serine 138 enclose the I-type lysozyme domain. 6 disulfide bridges follow: cysteine 20-cysteine 106, cysteine 25-cysteine 31, cysteine 36-cysteine 45, cysteine 58-cysteine 86, cysteine 76-cysteine 82, and cysteine 98-cysteine 120. Glutamate 28 functions as the Proton donor in the catalytic mechanism. Catalysis depends on aspartate 39, which acts as the Nucleophile. Lysine 51–aspartate 57 contributes to the substrate binding site. Residues tyrosine 90 and histidine 113–glycine 115 contribute to the substrate site.

Belongs to the glycosyl hydrolase 22 family. Type-I lysozyme subfamily. Expressed in pharyngeal gland cells and duct projections, coelomocytes and intestine.

The catalysed reaction is Hydrolysis of (1-&gt;4)-beta-linkages between N-acetylmuramic acid and N-acetyl-D-glucosamine residues in a peptidoglycan and between N-acetyl-D-glucosamine residues in chitodextrins.. Has bacteriolytic activity against Gram-positive bacteria. The chain is Invertebrate-type lysozyme 6 from Caenorhabditis elegans.